Here is a 353-residue protein sequence, read N- to C-terminus: Outer membrane protein P5 (353 aa).

Positions 1 to 21 (MKKTAIALVVAGLAAASVAQA) are cleaved as a signal peptide. Beta stranded transmembrane passes span 27 to 37 (TFYAGVKAGQA), 58 to 69 (SFTYGVFGGYQI), 77 to 85 (LAVELGYDD), 104 to 115 (HGTHLSLKGSYE), 120 to 128 (LDVYGKAGV), 158 to 167 (GLFAVGAEYA), 172 to 179 (LAVRLEYQ), and 205 to 213 (SINAGISYR). Residues 227–353 (VVSKTFSLNS…RVEIAVNGTK (127 aa)) form the OmpA-like domain. A disulfide bond links Cys-326 and Cys-338.

Belongs to the outer membrane OOP (TC 1.B.6) superfamily. OmpA family. Monomer and homodimer.

It is found in the cell outer membrane. Functionally, with TolR probably plays a role in maintaining the position of the peptidoglycan cell wall in the periplasm. Acts as a porin with low permeability that allows slow penetration of small solutes; an internal gate slows down solute passage. Reconstitution in planar bilayers with lithium dodecyl sulfate-solublized P5 yields narrow pores (58 pS conductance) with a low probability of opening, whereas n-octyl-bD-glucopyranoside-solubilized P5 forms large pores (1.1 nS conductance) with high open probability. The large pore easily converts to the smaller pore at room temperature; at 42 degrees Celsius the smaller pore converts to the larger one. The sequence is that of Outer membrane protein P5 from Haemophilus influenzae (strain ATCC 51907 / DSM 11121 / KW20 / Rd).